A 704-amino-acid chain; its full sequence is Phytyl ester synthase 1, chloroplastic (704 aa).

A chloroplast-targeting transit peptide spans 1-27; sequence MATCSSSLLVLPNLRLSSNQRRNFKVR.

The protein belongs to the diacylglycerol acyltransferase family. Interacts with PGM48. In terms of tissue distribution, mostly expressed in flowers (e.g. sepals, petals and stamen).

Its subcellular location is the plastid. The protein localises to the chloroplast. It is found in the plastoglobule. The enzyme catalyses a 1,2-diacyl-3-O-(beta-D-galactosyl)-sn-glycerol + a 1,2-diacylglycerol = an acyl-3-O-(beta-D-galactosyl)-sn-glycerol + a triacylglycerol. The catalysed reaction is a 1,2-diacylglycerol + a fatty acyl-CoA = a triacylglycerol + CoA. It carries out the reaction a fatty acyl-[ACP] + a 1,2-diacylglycerol = a triacylglycerol + holo-[ACP]. It catalyses the reaction phytol + a fatty acyl-CoA = a fatty acid phytyl ester + CoA. The enzyme catalyses phytol + tetradecanoyl-CoA = tetradecanoate phytyl ester + CoA. The catalysed reaction is a 1,3-diacylglycerol + a fatty acyl-CoA = a triacylglycerol + CoA. It carries out the reaction 1,2-dihexanoylglycerol + tetradecanoyl-CoA = 1,2-dihexanoyl-3-tetradecanoylglycerol + CoA. It catalyses the reaction 1,2-dihexanoylglycerol + hexadecanoyl-CoA = 1,2-dihexanoyl-3-hexadecanoylglycerol + CoA. The enzyme catalyses 1,2-dihexanoylglycerol + octadecanoyl-CoA = 1,2-dihexanoyl-3-octadecanoylglycerol + CoA. The catalysed reaction is (7Z,10Z,13Z)-hexadecatrienoyl-CoA + 1,2-dihexanoylglycerol = 1,2-dihexanoyl-3-(7Z,10Z,13Z-hexadecatrienoyl)-glycerol + CoA. It carries out the reaction 1,2-dihexanoylglycerol + (9Z)-octadecenoyl-CoA = 1,2-dihexanoyl-3-(9Z-octadecenoyl)-glycerol + CoA. It catalyses the reaction 1,2-dihexanoylglycerol + (9Z,12Z,15Z)-octadecatrienoyl-CoA = 1,2-dihexanoyl-3-(9Z,12Z,15Z-octadecatrienoyl)-glycerol + CoA. The enzyme catalyses phytol + decanoyl-CoA = decanoate phytyl ester + CoA. The catalysed reaction is (7Z,10Z,13Z)-hexadecatrienoyl-CoA + phytol = (7Z,10Z,13Z)-hexadecatrienoate phytyl ester + CoA. It carries out the reaction phytol + dodecanoyl-CoA = dodecanoate phytyl ester + CoA. Its function is as follows. Acyltransferase involved in fatty acid phytyl ester synthesis in chloroplasts, a process required for the maintenance of the photosynthetic membrane integrity during abiotic stress and senescence. Exhibits phytyl ester synthesis and diacylglycerol acyltransferase activities with broad substrate specificities, and can employ acyl-CoAs, acyl carrier proteins, and galactolipids as acyl donors. The sequence is that of Phytyl ester synthase 1, chloroplastic from Arabidopsis thaliana (Mouse-ear cress).